Here is a 453-residue protein sequence, read N- to C-terminus: Serine/threonine-protein phosphatase 2A 55 kDa regulatory subunit B delta isoform (453 aa).

4 WD repeats span residues 32-71 (AEAD…KGRA), 97-138 (EIEE…KRAE), 181-219 (AHTY…RSFN), and 230-270 (ELTE…LCDR). Ser285 carries the post-translational modification Phosphoserine. WD repeat units lie at residues 289–327 (EIIS…RPVE), 344–385 (ENDC…DVTL), and 420–452 (DFNK…QDKI). Tyr305 carries the post-translational modification Phosphotyrosine. At Thr308 the chain carries Phosphothreonine.

The protein belongs to the phosphatase 2A regulatory subunit B family. PP2A consists of a common heterodimeric core enzyme, composed of a 36 kDa catalytic subunit (subunit C) and a 65 kDa constant regulatory subunit (PR65 or subunit A), that associates with a variety of regulatory subunits. Proteins that associate with the core dimer include three families of regulatory subunits B (the R2/B/PR55/B55, R3/B''/PR72/PR130/PR59 and R5/B'/B56 families), the 48 kDa variable regulatory subunit, viral proteins, and cell signaling molecules. Interacts with IER5.

It is found in the cytoplasm. In terms of biological role, substrate-recognition subunit of protein phosphatase 2A (PP2A) that plays a key role in cell cycle by controlling mitosis entry and exit. Involved in chromosome clustering during late mitosis by mediating dephosphorylation of MKI67. The activity of PP2A complexes containing PPP2R2D (PR55-delta) fluctuate during the cell cycle: the activity is high in interphase and low in mitosis. The polypeptide is Serine/threonine-protein phosphatase 2A 55 kDa regulatory subunit B delta isoform (Mus musculus (Mouse)).